The chain runs to 407 residues: 5-aminolevulinate synthase 2 (407 aa).

2 residues coordinate substrate: Arg-21 and Ser-137. 3 residues coordinate pyridoxal 5'-phosphate: Ser-189, His-217, and Thr-245. The active site involves Lys-248. Lys-248 is subject to N6-(pyridoxal phosphate)lysine. Thr-277 and Thr-278 together coordinate pyridoxal 5'-phosphate. Residue Thr-363 coordinates substrate.

It belongs to the class-II pyridoxal-phosphate-dependent aminotransferase family. Homodimer. Pyridoxal 5'-phosphate serves as cofactor.

The enzyme catalyses succinyl-CoA + glycine + H(+) = 5-aminolevulinate + CO2 + CoA. Its pathway is porphyrin-containing compound metabolism; protoporphyrin-IX biosynthesis; 5-aminolevulinate from glycine: step 1/1. This is 5-aminolevulinate synthase 2 (hemT) from Cereibacter sphaeroides (strain ATCC 17023 / DSM 158 / JCM 6121 / CCUG 31486 / LMG 2827 / NBRC 12203 / NCIMB 8253 / ATH 2.4.1.) (Rhodobacter sphaeroides).